The sequence spans 727 residues: Phosphoribosylformylglycinamidine synthase subunit PurL (727 aa).

H47 is an active-site residue. Positions 50 and 89 each coordinate ATP. E91 lines the Mg(2+) pocket. Residues 92-95 (SHNH) and R114 each bind substrate. The active-site Proton acceptor is the H93. D115 provides a ligand contact to Mg(2+). Substrate is bound at residue Q238. D266 provides a ligand contact to Mg(2+). 310–312 (ESQ) is a binding site for substrate. ATP-binding residues include D490 and G527. Mg(2+) is bound at residue N528. S530 lines the substrate pocket.

The protein belongs to the FGAMS family. As to quaternary structure, monomer. Part of the FGAM synthase complex composed of 1 PurL, 1 PurQ and 2 PurS subunits.

Its subcellular location is the cytoplasm. The catalysed reaction is N(2)-formyl-N(1)-(5-phospho-beta-D-ribosyl)glycinamide + L-glutamine + ATP + H2O = 2-formamido-N(1)-(5-O-phospho-beta-D-ribosyl)acetamidine + L-glutamate + ADP + phosphate + H(+). It functions in the pathway purine metabolism; IMP biosynthesis via de novo pathway; 5-amino-1-(5-phospho-D-ribosyl)imidazole from N(2)-formyl-N(1)-(5-phospho-D-ribosyl)glycinamide: step 1/2. Part of the phosphoribosylformylglycinamidine synthase complex involved in the purines biosynthetic pathway. Catalyzes the ATP-dependent conversion of formylglycinamide ribonucleotide (FGAR) and glutamine to yield formylglycinamidine ribonucleotide (FGAM) and glutamate. The FGAM synthase complex is composed of three subunits. PurQ produces an ammonia molecule by converting glutamine to glutamate. PurL transfers the ammonia molecule to FGAR to form FGAM in an ATP-dependent manner. PurS interacts with PurQ and PurL and is thought to assist in the transfer of the ammonia molecule from PurQ to PurL. This chain is Phosphoribosylformylglycinamidine synthase subunit PurL, found in Acidiphilium cryptum (strain JF-5).